The sequence spans 730 residues: Meiotically up-regulated gene 70 protein (730 aa).

Residues 1 to 27 are disordered; that stretch reads MTVGTLSVVSSTASDTASHVSDTRKRQ. A compositionally biased stretch (low complexity) spans 7–20; the sequence is SVVSSTASDTASHV. CBS domains lie at 69 to 127, 135 to 200, 263 to 319, and 328 to 385; these read ALDP…LNAR, MSTS…RIAR, SSEE…GLDP, and MTPH…PEEE. 2 helical membrane-spanning segments follow: residues 290-310 and 358-378; these read AVLVMDNGAVSGVFTAHDVVL and VVDESDAIIGMLSLFHLATAI. The tract at residues 420-517 is disordered; sequence ENYDVNPPLP…ENGSNSFAAS (98 aa). 2 stretches are compositionally biased toward polar residues: residues 458 to 470 and 480 to 515; these read AWQNENLSSNNKP and YNFSNNPPTAMSEQSFHPSVSQKPMDTPENGSNSFA. In terms of domain architecture, PB1 spans 572 to 649; sequence PSQFTIKYRS…ARRRGLPRLE (78 aa). A helical transmembrane segment spans residues 706–726; sequence PIYIGIVSSSIVILAVSMWYL.

Its subcellular location is the cytoplasm. It is found in the nucleus membrane. Its function is as follows. Has a role in meiosis. This is Meiotically up-regulated gene 70 protein (mug70) from Schizosaccharomyces pombe (strain 972 / ATCC 24843) (Fission yeast).